The chain runs to 214 residues: MENLFELHADVRVEQGKGASRRLRRAGKVPAVLYGAAKEPISLLFDHNLLFRHLSHDAFYSHILTIHANGKAERVVLKALQRDPVNPNKVLHLDLQRVSSTQKLTIKVPLHFIGDEMAPGVKQEGGTVARLLNDIEISCLAKDLPEYIEVDLADLGVGETVHLSDLKLPGGVEIPALKLGEDYDQPVVTIHKPRAAAEEEDTGAEGDVEAADAE.

Residues 193-214 (PRAAAEEEDTGAEGDVEAADAE) form a disordered region. A compositionally biased stretch (acidic residues) spans 198–214 (EEEDTGAEGDVEAADAE).

Belongs to the bacterial ribosomal protein bL25 family. CTC subfamily. Part of the 50S ribosomal subunit; part of the 5S rRNA/L5/L18/L25 subcomplex. Contacts the 5S rRNA. Binds to the 5S rRNA independently of L5 and L18.

This is one of the proteins that binds to the 5S RNA in the ribosome where it forms part of the central protuberance. The protein is Large ribosomal subunit protein bL25 of Nitrosococcus oceani (strain ATCC 19707 / BCRC 17464 / JCM 30415 / NCIMB 11848 / C-107).